The primary structure comprises 1265 residues: Protein diaphanous homolog 1 (1265 aa).

The residue at position 1 (methionine 1) is an N-acetylmethionine. Over residues 1–12 the composition is skewed to gly residues; that stretch reads MEPSGGGLGPGR. Disordered stretches follow at residues 1 to 42 and 54 to 83; these read MEPS…FTLK and SMRI…TAQS. A Phosphoserine modification is found at serine 22. Over residues 54–65 the composition is skewed to basic and acidic residues; the sequence is SMRIKKEKEKPN. Polar residues predominate over residues 67-83; sequence AHRNSSASYGDDPTAQS. The region spanning 84-449 is the GBD/FH3 domain; that stretch reads LQDISDDQVL…QIVLHKNGTD (366 aa). Positions 474 to 568 form a coiled coil; the sequence is VEKSEAKATE…KKEMASLSAV (95 aa). Positions 573–742 are disordered; sequence SVSSSAAVPQ…PPPPGMGVPP (170 aa). Composition is skewed to pro residues over residues 594–628 and 645–742; these read IPPP…PPLP and IPPP…GVPP. The FH1 domain occupies 625–757; it reads PPLPGGACIS…FGIPAAPVLP (133 aa). The residue at position 761 (threonine 761) is a Phosphothreonine. In terms of domain architecture, FH2 spans 762-1164; it reads PKKVYKPEVQ…MRRAKLAKEK (403 aa). Residues lysine 1050 and lysine 1096 each carry the N6-acetyllysine modification. Phosphotyrosine is present on tyrosine 1114. Residues 1141 to 1185 are a coiled coil; that stretch reads AVKENQKRRETEEKMRRAKLAKEKAEKERLEKQQKREQLIDMNAE. The DAD domain maps to 1187–1215; the sequence is DETGVMDSLLEALQSGAAFRRKRGPRQVN. A Phosphoserine modification is found at serine 1247.

Belongs to the formin homology family. Diaphanous subfamily. In terms of assembly, homodimer. Interacts with the GTP-bound form of RHOA. Interacts with RHOC, PFY1, MAPRE1, BAIAP2 and APC. Interacts with SCAI. Interacts with DCAF7, via FH2 domain. Interacts with NCDN. Interacts with OSBPL10, OSBPL2, VIM, TUBB and DYN1. Post-translationally, phosphorylation at Thr-761 is stimulated by cAMP and regulates stability, complex formation and mitochondrial movement. Expressed in testis. Present in Sertoli cells (at protein level).

The protein localises to the cell membrane. Its subcellular location is the cell projection. The protein resides in the ruffle membrane. It localises to the cytoplasm. It is found in the cytoskeleton. The protein localises to the microtubule organizing center. Its subcellular location is the centrosome. The protein resides in the spindle. It localises to the nucleus. Actin nucleation and elongation factor required for the assembly of F-actin structures, such as actin cables and stress fibers. Binds to the barbed end of the actin filament and slows down actin polymerization and depolymerization. Required for cytokinesis, and transcriptional activation of the serum response factor. DFR proteins couple Rho and Src tyrosine kinase during signaling and the regulation of actin dynamics. Functions as a scaffold protein for MAPRE1 and APC to stabilize microtubules and promote cell migration. Has neurite outgrowth promoting activity. Acts in a Rho-dependent manner to recruit PFY1 to the membrane. The MEMO1-RHOA-DIAPH1 signaling pathway plays an important role in ERBB2-dependent stabilization of microtubules at the cell cortex. It controls the localization of APC and CLASP2 to the cell membrane, via the regulation of GSK3B activity. In turn, membrane-bound APC allows the localization of the MACF1 to the cell membrane, which is required for microtubule capture and stabilization. Plays a role in the regulation of cell morphology and cytoskeletal organization. Required in the control of cell shape. Also acts as an actin nucleation and elongation factor in the nucleus by promoting nuclear actin polymerization inside the nucleus to drive serum-dependent SRF-MRTFA activity. The chain is Protein diaphanous homolog 1 from Rattus norvegicus (Rat).